The sequence spans 318 residues: Acetyl-coenzyme A carboxylase carboxyl transferase subunit alpha (318 aa).

The region spanning 38-292 (KLEKRLAKLE…NKTITKSLHA (255 aa)) is the CoA carboxyltransferase C-terminal domain.

Belongs to the AccA family. In terms of assembly, acetyl-CoA carboxylase is a heterohexamer composed of biotin carboxyl carrier protein (AccB), biotin carboxylase (AccC) and two subunits each of ACCase subunit alpha (AccA) and ACCase subunit beta (AccD).

It is found in the cytoplasm. It carries out the reaction N(6)-carboxybiotinyl-L-lysyl-[protein] + acetyl-CoA = N(6)-biotinyl-L-lysyl-[protein] + malonyl-CoA. It participates in lipid metabolism; malonyl-CoA biosynthesis; malonyl-CoA from acetyl-CoA: step 1/1. Its function is as follows. Component of the acetyl coenzyme A carboxylase (ACC) complex. First, biotin carboxylase catalyzes the carboxylation of biotin on its carrier protein (BCCP) and then the CO(2) group is transferred by the carboxyltransferase to acetyl-CoA to form malonyl-CoA. The protein is Acetyl-coenzyme A carboxylase carboxyl transferase subunit alpha of Listeria monocytogenes serovar 1/2a (strain ATCC BAA-679 / EGD-e).